Consider the following 277-residue polypeptide: MLPAKFKTPSQKSLNRRMASIPDGLVRRCPVCHTTFLTDHWEPTRLCPACGYGFRLTAMQRIKLTMDTFQETNAQLTVPDRYTDAAYQAKVARGRQLTGLNESVLTGFGTIDHQSTAIGVMDAFFVMGSLGTATGEKITRLFDEATAKRLPVILFTASGGARMQEGIHSLMQMAKVSAAVARHSQAGLLYIVVLCDPTTGGVTASFAMQGDLILAEPHALVGFAGRRVIEQTIHQTPPADFQRAETVLQHGFIDAIVARPQLKQRLADLLRLHKGES.

One can recognise a CoA carboxyltransferase N-terminal domain in the interval 25–277; it reads LVRRCPVCHT…DLLRLHKGES (253 aa). Cysteine 29, cysteine 32, cysteine 47, and cysteine 50 together coordinate Zn(2+). The C4-type zinc-finger motif lies at 29–50; sequence CPVCHTTFLTDHWEPTRLCPAC.

This sequence belongs to the AccD/PCCB family. Acetyl-CoA carboxylase is a heterohexamer composed of biotin carboxyl carrier protein (AccB), biotin carboxylase (AccC) and two subunits each of ACCase subunit alpha (AccA) and ACCase subunit beta (AccD). Zn(2+) is required as a cofactor.

The protein localises to the cytoplasm. The catalysed reaction is N(6)-carboxybiotinyl-L-lysyl-[protein] + acetyl-CoA = N(6)-biotinyl-L-lysyl-[protein] + malonyl-CoA. Its pathway is lipid metabolism; malonyl-CoA biosynthesis; malonyl-CoA from acetyl-CoA: step 1/1. Component of the acetyl coenzyme A carboxylase (ACC) complex. Biotin carboxylase (BC) catalyzes the carboxylation of biotin on its carrier protein (BCCP) and then the CO(2) group is transferred by the transcarboxylase to acetyl-CoA to form malonyl-CoA. This chain is Acetyl-coenzyme A carboxylase carboxyl transferase subunit beta, found in Levilactobacillus brevis (strain ATCC 367 / BCRC 12310 / CIP 105137 / JCM 1170 / LMG 11437 / NCIMB 947 / NCTC 947) (Lactobacillus brevis).